The primary structure comprises 642 residues: Threonine--tRNA ligase (642 aa).

One can recognise a TGS domain in the interval 1–61; the sequence is MPVITLPDGS…ESDAQLAIIT (61 aa). A catalytic region spans residues 243-534; that stretch reads DHRKIGKQLD…LTEEYAGFFP (292 aa). Zn(2+) is bound by residues C334, H385, and H511.

The protein belongs to the class-II aminoacyl-tRNA synthetase family. Homodimer. Requires Zn(2+) as cofactor.

It is found in the cytoplasm. It catalyses the reaction tRNA(Thr) + L-threonine + ATP = L-threonyl-tRNA(Thr) + AMP + diphosphate + H(+). Catalyzes the attachment of threonine to tRNA(Thr) in a two-step reaction: L-threonine is first activated by ATP to form Thr-AMP and then transferred to the acceptor end of tRNA(Thr). Also edits incorrectly charged L-seryl-tRNA(Thr). The sequence is that of Threonine--tRNA ligase from Yersinia enterocolitica serotype O:8 / biotype 1B (strain NCTC 13174 / 8081).